Reading from the N-terminus, the 350-residue chain is MPVLHNRISNDALKAKMLAESEPRTTISFYKYFHIADPKVTRDALYQLFTALNVFGRVYLAHEGINAQISVPASNVETFRAQLYAFDPALEGLRLNIALDDDGKSFWVLRMKVRDRIVADGIDDPHFDASNVGEYLQAAEVNAMLDDPDALFIDMRNHYEYEVGHFENALEIPADTFREQLPKAVEMMQAHKDKKIVMYCTGGIRCEKASAWMKHNGFNKVWHIEGGIIEYARKARDQGLPVRFIGKNFVFDERMGERISDEIIAHCHQCGAPCDSHTNCKNDGCHLLFIQCPVCAEKYKGCCSEICCEESALPPDEQRRRRAGRENGNKIFNKSRGRLNTTLGIPDPTE.

One can recognise a Rhodanese domain in the interval Asp146–Leu240. Cys200 functions as the Cysteine persulfide intermediate in the catalytic mechanism.

This sequence belongs to the TrhO family.

It carries out the reaction uridine(34) in tRNA + AH2 + O2 = 5-hydroxyuridine(34) in tRNA + A + H2O. In terms of biological role, catalyzes oxygen-dependent 5-hydroxyuridine (ho5U) modification at position 34 in tRNAs, the first step in 5-carboxymethoxyuridine (cmo5U) biosynthesis. May be part of an alternate pathway, which is able to bypass cmo5U biogenesis in a subset of tRNAs under aerobic conditions. The sequence is that of tRNA uridine(34) hydroxylase from Escherichia coli O6:K15:H31 (strain 536 / UPEC).